A 198-amino-acid polypeptide reads, in one-letter code: Outer-membrane lipoprotein carrier protein (198 aa).

Residues 1–17 form the signal peptide; it reads MKKFLFSLCLLSSTVLA.

This sequence belongs to the LolA family. As to quaternary structure, monomer.

The protein localises to the periplasm. In terms of biological role, participates in the translocation of lipoproteins from the inner membrane to the outer membrane. Only forms a complex with a lipoprotein if the residue after the N-terminal Cys is not an aspartate (The Asp acts as a targeting signal to indicate that the lipoprotein should stay in the inner membrane). The sequence is that of Outer-membrane lipoprotein carrier protein from Aliivibrio fischeri (strain ATCC 700601 / ES114) (Vibrio fischeri).